Reading from the N-terminus, the 209-residue chain is N-(5'-phosphoribosyl)anthranilate isomerase (209 aa).

The protein belongs to the TrpF family.

It carries out the reaction N-(5-phospho-beta-D-ribosyl)anthranilate = 1-(2-carboxyphenylamino)-1-deoxy-D-ribulose 5-phosphate. The protein operates within amino-acid biosynthesis; L-tryptophan biosynthesis; L-tryptophan from chorismate: step 3/5. The sequence is that of N-(5'-phosphoribosyl)anthranilate isomerase from Pelobacter propionicus (strain DSM 2379 / NBRC 103807 / OttBd1).